A 382-amino-acid chain; its full sequence is Opsin Rh3 (382 aa).

The Extracellular portion of the chain corresponds to 1–56; that stretch reads MEYHNVSSVLGNVSSVLRPDARLSAESRLLGWNVPPDELRHIPEHWLIYPEPPESM. N12 is a glycosylation site (N-linked (GlcNAc...) asparagine). The helical transmembrane segment at 57 to 81 threads the bilayer; that stretch reads NYLLGTLYIFFTVISMIGNGLVMWV. At 82–93 the chain is on the cytoplasmic side; it reads FSAAKSLRTPSN. A helical membrane pass occupies residues 94-118; that stretch reads ILVINLAFCDFMMMIKTPIFIYNSF. The Extracellular segment spans residues 119–132; it reads HQGYALGHLGCQIF. A disulfide bridge connects residues C129 and C206. Residues 133–152 traverse the membrane as a helical segment; the sequence is GVIGSYTGIAAGATNAFIAY. At 153–170 the chain is on the cytoplasmic side; the sequence is DRYNVITRPMEGKMTHGK. Residues 171 to 195 traverse the membrane as a helical segment; it reads AIAMIIFIYLYATPWVVACYTESWG. Residues 196–219 lie on the Extracellular side of the membrane; sequence RFVPEGYLTSCTFDYLTDNFDTRL. Residues 220–247 form a helical membrane-spanning segment; the sequence is FVACIFFFSFVCPTTMITYYYSQIVGHV. Residues 248–283 lie on the Cytoplasmic side of the membrane; sequence FSHEKALRDQAKKMNVDSLRSNVDKSKEAAEIRIAK. Residues 284-307 traverse the membrane as a helical segment; that stretch reads AAITICFLFFASWTPYGVMSLIGA. At 308 to 315 the chain is on the extracellular side; sequence FGDKTLLT. A helical transmembrane segment spans residues 316–340; sequence PGATMIPACTCKMVACIDPFVYAIS. K327 bears the N6-(retinylidene)lysine mark. Residues 341–382 lie on the Cytoplasmic side of the membrane; it reads HPRYRMELQKRCPWLAISEKAPESAAAISTSTTQEQQQTTAA.

It belongs to the G-protein coupled receptor 1 family. Opsin subfamily. Post-translationally, phosphorylated on some or all of the serine and threonine residues present in the C-terminal region.

The protein resides in the membrane. Functionally, visual pigments are the light-absorbing molecules that mediate vision. They consist of an apoprotein, opsin, covalently linked to cis-retinal. The protein is Opsin Rh3 (Rh3) of Drosophila pseudoobscura pseudoobscura (Fruit fly).